A 312-amino-acid chain; its full sequence is Ribonuclease Z (312 aa).

Residues His-62, His-64, Asp-66, His-67, His-144, Asp-215, and His-273 each coordinate Zn(2+). The Proton acceptor role is filled by Asp-66.

The protein belongs to the RNase Z family. In terms of assembly, homodimer. The cofactor is Zn(2+).

The enzyme catalyses Endonucleolytic cleavage of RNA, removing extra 3' nucleotides from tRNA precursor, generating 3' termini of tRNAs. A 3'-hydroxy group is left at the tRNA terminus and a 5'-phosphoryl group is left at the trailer molecule.. Zinc phosphodiesterase, which displays some tRNA 3'-processing endonuclease activity. Probably involved in tRNA maturation, by removing a 3'-trailer from precursor tRNA. In Prochlorococcus marinus (strain MIT 9301), this protein is Ribonuclease Z.